Consider the following 232-residue polypeptide: uncharacterized protein (232 aa).

The segment covering 86 to 95 has biased composition (basic and acidic residues); sequence RGLPRPEFKA. A disordered region spans residues 86–107; sequence RGLPRPEFKANGHPSMDAEADD.

This is an uncharacterized protein from Sinorhizobium fredii (strain NBRC 101917 / NGR234).